Here is a 189-residue protein sequence, read N- to C-terminus: UPF0200 protein Smar_1234 (189 aa).

10–17 (GMPGAGKS) contributes to the ATP binding site.

The protein belongs to the UPF0200 family.

This chain is UPF0200 protein Smar_1234, found in Staphylothermus marinus (strain ATCC 43588 / DSM 3639 / JCM 9404 / F1).